Reading from the N-terminus, the 357-residue chain is uncharacterized protein (357 aa).

Phosphoserine is present on serine 72. 3 disordered regions span residues glycine 79–arginine 98, glutamine 264–valine 290, and isoleucine 323–lysine 357. Residues serine 324–serine 335 show a composition bias toward acidic residues.

This is an uncharacterized protein from Saccharomyces cerevisiae (strain ATCC 204508 / S288c) (Baker's yeast).